A 387-amino-acid polypeptide reads, in one-letter code: 3-ketoacyl-CoA thiolase (387 aa).

Residue C91 is the Acyl-thioester intermediate of the active site. Active-site proton acceptor residues include H343 and C373.

It belongs to the thiolase-like superfamily. Thiolase family. In terms of assembly, heterotetramer of two alpha chains (FadB) and two beta chains (FadA).

It is found in the cytoplasm. It carries out the reaction an acyl-CoA + acetyl-CoA = a 3-oxoacyl-CoA + CoA. The protein operates within lipid metabolism; fatty acid beta-oxidation. Functionally, catalyzes the final step of fatty acid oxidation in which acetyl-CoA is released and the CoA ester of a fatty acid two carbons shorter is formed. This is 3-ketoacyl-CoA thiolase from Aliivibrio salmonicida (strain LFI1238) (Vibrio salmonicida (strain LFI1238)).